A 633-amino-acid chain; its full sequence is Probably inactive receptor-like protein kinase At2g46850 (633 aa).

Positions 1–28 (MPPLFLPSSSSALFLLLLLLLTLQTLTS) are cleaved as a signal peptide. Topologically, residues 29–285 (ISLSQPQALR…IKKHNGKKLT (257 aa)) are extracellular. Residues N45, N69, and N231 are each glycosylated (N-linked (GlcNAc...) asparagine). The chain crosses the membrane as a helical span at residues 286-306 (VLAGVLAPLFILGSLLALFCL). Residues 307-633 (LKRPVTSHKD…SPDSIYLPKT (327 aa)) lie on the Cytoplasmic side of the membrane. The Protein kinase domain occupies 355-633 (FQDSQKLTQG…SPDSIYLPKT (279 aa)). Residues 361–369 (LTQGKTGTI) and K384 contribute to the ATP site.

It belongs to the protein kinase superfamily. Ser/Thr protein kinase family.

It is found in the membrane. The protein is Probably inactive receptor-like protein kinase At2g46850 of Arabidopsis thaliana (Mouse-ear cress).